A 436-amino-acid chain; its full sequence is MNGNTGVVSGVRVSHETASLDELAAASAASTEAALDALLEQPPVEEAFVLQTCHRVEAYVVTADQASGRRALGGAGFNPAGGGAISMGHEDSLRHLLRVAAGLESLVVGEDQILGQLRDAYDAAKDAGGIDHVLREAVTKAMHVGERARTETAINEGATSLGTAAVRLAERKTQLADARAVVVGAGEMGALAAKAFASATVAEIVIANRTPARAVRVADMVSVPAEATTLADARGRLDAADVVVTATGSPEHVLPASAFADAGDTVVVDLAQPRDVAPGAGGHDGVAVHDLDDLEAVTAATRERREDAAREVEAMIETEFERLLTQYKRKRADEVIARMYESADRLKSREVQTAVHRLEAESGSLSADEREVVESMADALVSQLLAAPTKSLRDAAAEDDWSTIATALELFNPEFEDGMPFDASRGGDAASAESED.

Residues 52–55, Ser-105, 110–112, and Gln-116 each bind substrate; these read TCHR and EDQ. Cys-53 serves as the catalytic Nucleophile. Position 184 to 189 (184 to 189) interacts with NADP(+); sequence GAGEMG.

It belongs to the glutamyl-tRNA reductase family. Homodimer.

It catalyses the reaction (S)-4-amino-5-oxopentanoate + tRNA(Glu) + NADP(+) = L-glutamyl-tRNA(Glu) + NADPH + H(+). Its pathway is porphyrin-containing compound metabolism; protoporphyrin-IX biosynthesis; 5-aminolevulinate from L-glutamyl-tRNA(Glu): step 1/2. In terms of biological role, catalyzes the NADPH-dependent reduction of glutamyl-tRNA(Glu) to glutamate 1-semialdehyde (GSA). In Halobacterium salinarum (strain ATCC 29341 / DSM 671 / R1), this protein is Glutamyl-tRNA reductase.